Consider the following 442-residue polypeptide: SPRY domain-containing protein 3 (442 aa).

The B30.2/SPRY domain maps to Asp-17–Gly-204. The segment at Glu-371–Gly-394 is disordered. Positions Gly-372 to Pro-390 are enriched in acidic residues.

This chain is SPRY domain-containing protein 3 (SPRYD3), found in Pongo abelii (Sumatran orangutan).